A 461-amino-acid chain; its full sequence is Metacaspase-1 (461 aa).

Composition is skewed to gly residues over residues 1-21, 45-66, 74-86, and 105-119; these read MSYP…GYGG, QYGG…GYGP, and PGGQ…GHPG. Residues 1–154 are disordered; that stretch reads MSYPGQGGNT…PQGNQAFGGT (154 aa). 2 stretches are compositionally biased toward low complexity: residues 121–131 and 138–148; these read GNQAPPGQYGQ and HGNHNMPPQGN. Catalysis depends on residues His252 and Cys308.

This sequence belongs to the peptidase C14B family.

In terms of biological role, involved in cell death (apoptosis). This is Metacaspase-1 (MCA1) from Yarrowia lipolytica (strain CLIB 122 / E 150) (Yeast).